Here is a 752-residue protein sequence, read N- to C-terminus: Myb-related protein A (752 aa).

Residues 1-22 form a disordered region; sequence MAKRSRSEDEDDDLQYADHDYE. HTH myb-type domains lie at 30-81, 82-137, and 138-188; these read KKLW…QKVL, NPEL…NPEV, and KKSS…RRKV. 3 DNA-binding regions (H-T-H motif) span residues 58–81, 110–133, and 161–184; these read WTLI…QKVL, WSLI…HNHL, and WAEI…NSTM. A Glycyl lysine isopeptide (Lys-Gly) (interchain with G-Cter in SUMO2) cross-link involves residue K199. The transcriptional activation domain stretch occupies residues 230-295; it reads IPGYQYVSPE…RIPSQPGSFS (66 aa). Positions 298 to 553 are negative regulatory domain; it reads SGSFLMDDNM…IRRSILGTTP (256 aa). The residue at position 394 (K394) is an N6-acetyllysine. Positions 451–480 are disordered; it reads RKMRVGHSPGSELRDGSLNDGGNMALKHTP. Glycyl lysine isopeptide (Lys-Gly) (interchain with G-Cter in SUMO2) cross-links involve residues K592 and K602.

As to quaternary structure, component of the DREAM complex (also named LINC complex) at least composed of E2F4, E2F5, LIN9, LIN37, LIN52, LIN54, MYBL1, MYBL2, RBL1, RBL2, RBBP4, TFDP1 and TFDP2. The complex exists in quiescent cells where it represses cell cycle-dependent genes. It dissociates in S phase when LIN9, LIN37, LIN52 and LIN54 form a subcomplex that binds to MYBL2. Expressed in a variety of lymphoid and solid tumor lines cultured in vitro.

Its subcellular location is the nucleus. Functionally, transcription factor that specifically recognizes the sequence 5'-YAAC[GT]G-3'. Acts as a master regulator of male meiosis by promoting expression of piRNAs: activates expression of both piRNA precursor RNAs and expression of protein-coding genes involved in piRNA metabolism. The piRNA metabolic process mediates the repression of transposable elements during meiosis by forming complexes composed of piRNAs and Piwi proteins and governs the methylation and subsequent repression of transposons, which is essential for the germline integrity. Transcriptional activator of SOX30. In Homo sapiens (Human), this protein is Myb-related protein A (MYBL1).